A 980-amino-acid chain; its full sequence is Envelope glycoprotein B (980 aa).

A compositionally biased stretch (polar residues) spans 1-14; it reads MSSGCRSVGGSTWG. Disordered stretches follow at residues 1–20 and 88–118; these read MSSGCRSVGGSTWGNWRGDG and TTPSPPTSTPTSMSTHSHGTVDPTLLPTETP. The first 86 residues, 1-86, serve as a signal peptide directing secretion; the sequence is MSSGCRSVGG…LFGSCVVRAV (86 aa). Residues 87–849 lie on the Virion surface side of the membrane; sequence PTTPSPPTST…SGIASFLNNP (763 aa). Residues 96–118 are compositionally biased toward low complexity; it reads TPTSMSTHSHGTVDPTLLPTETP. 5 disulfides stabilise this stretch: Cys140–Cys647, Cys157–Cys603, Cys231–Cys296, Cys389–Cys437, and Cys668–Cys708. Asn165 carries an N-linked (GlcNAc...) asparagine; by host glycan. The tract at residues 197-203 is involved in fusion and/or binding to host membrane; it reads VWKGYSH. The N-linked (GlcNAc...) asparagine; by host glycan is linked to Asn275. An involved in fusion and/or binding to host membrane region spans residues 282–290; it reads GWMPWRHYT. N-linked (GlcNAc...) asparagine; by host glycosylation is found at Asn380, Asn423, Asn497, Asn514, Asn515, and Asn560. The span at 505-516 shows a compositional bias: low complexity; it reads LLNPNANNNNNT. A disordered region spans residues 505 to 535; sequence LLNPNANNNNNTTRRRRSLLSVPEPQPTQDG. N-linked (GlcNAc...) asparagine; by host glycosylation is found at Asn727 and Asn749. Hydrophobic membrane proximal region stretches follow at residues 794–847 and 823–843; these read IDSV…SFLN and AVGTLVLAAAGAVVSTVSGIA. A helical transmembrane segment spans residues 850–870; that stretch reads FGGLAIGLLVIAGLVAAFFAY. Residues 871–980 lie on the Intravirion side of the membrane; it reads RYVMQIRSNP…NDTMENEKMV (110 aa). Residues 925-928 carry the Golgi targeting motif; the sequence is YMSM. An Internalization motif motif is present at residues 965–968; it reads YTRL.

This sequence belongs to the herpesviridae glycoprotein B family. In terms of assembly, homotrimer; disulfide-linked. Binds to heparan sulfate proteoglycans. Interacts with gH/gL heterodimer. A proteolytic cleavage by host furin generates two subunits that remain linked by disulfide bonds.

Its subcellular location is the virion membrane. It is found in the host cell membrane. The protein resides in the host endosome membrane. It localises to the host Golgi apparatus membrane. In terms of biological role, envelope glycoprotein that forms spikes at the surface of virion envelope. Essential for the initial attachment to heparan sulfate moieties of the host cell surface proteoglycans. Involved in fusion of viral and cellular membranes leading to virus entry into the host cell. Following initial binding to its host receptors, membrane fusion is mediated by the fusion machinery composed at least of gB and the heterodimer gH/gL. May be involved in the fusion between the virion envelope and the outer nuclear membrane during virion egress. The sequence is that of Envelope glycoprotein B from Equine herpesvirus 1 (strain AB1) (EHV-1).